A 151-amino-acid chain; its full sequence is Melatonin receptor type 1C (151 aa).

Residues 1 to 13 (CHSLRYDRLYSRR) lie on the Cytoplasmic side of the membrane. The chain crosses the membrane as a helical span at residues 14 to 34 (NTCLYLLLTWMLTALATVPNF). Over 35–58 (LVGSLKYDPRVFSCTFTQTASSSY) the chain is Extracellular. A helical transmembrane segment spans residues 59–79 (TVCVVLIHFLVPLGVVSFCYL). The Cytoplasmic portion of the chain corresponds to 80 to 109 (RIWTLVIRVKGRVRPNPKVRAADLRNFLTM). The helical transmembrane segment at 110–130 (FVVFVLFAVCWAPLNFIGLAV) threads the bilayer. Over 131 to 143 (AINPAKVAPNIPE) the chain is Extracellular. A helical membrane pass occupies residues 144–151 (WLFVTSYF).

The protein belongs to the G-protein coupled receptor 1 family.

Its subcellular location is the cell membrane. Its function is as follows. High affinity receptor for melatonin. The activity of this receptor is mediated by pertussis toxin sensitive G proteins that inhibits adenylate cyclase activity. The protein is Melatonin receptor type 1C (mtnr1c) of Danio rerio (Zebrafish).